A 279-amino-acid chain; its full sequence is Protein phosphatase 1 regulatory subunit 3E (279 aa).

Phosphoserine occurs at positions 16 and 33. Residues 28–89 (RSQRPSLEEE…RSPDTRKRVR (62 aa)) form a disordered region. Basic residues predominate over residues 51–65 (ARSRAHVPGRGRRAR). At serine 66 the chain carries Phosphoserine. The PP1-binding motif motif lies at 87 to 90 (RVRF). The CBM21 domain maps to 154 to 259 (AARLQAQRIC…NNGGRDYALL (106 aa)). The segment at 176–198 (GSARVLDLAYEKRVSVRWSADGW) is glycogen-binding motif. Positions 248-256 (WDNNGGRDY) are substrate-binding motif.

As to expression, expressed in liver and heart, with low levels in skeletal muscle.

Acts as a glycogen-targeting subunit for PP1. PP1 is involved in glycogen metabolism and contributes to the activation of glycogen synthase leading to an increase in glycogen synthesis. The polypeptide is Protein phosphatase 1 regulatory subunit 3E (Ppp1r3e) (Rattus norvegicus (Rat)).